The sequence spans 352 residues: Chorismate synthase (352 aa).

Arg-48 and Arg-54 together coordinate NADP(+). FMN contacts are provided by residues 125-127, 238-239, Ala-278, 293-297, and Arg-319; these read RAS, NA, and KPASS.

Belongs to the chorismate synthase family. Homotetramer. FMNH2 is required as a cofactor.

It carries out the reaction 5-O-(1-carboxyvinyl)-3-phosphoshikimate = chorismate + phosphate. The protein operates within metabolic intermediate biosynthesis; chorismate biosynthesis; chorismate from D-erythrose 4-phosphate and phosphoenolpyruvate: step 7/7. Catalyzes the anti-1,4-elimination of the C-3 phosphate and the C-6 proR hydrogen from 5-enolpyruvylshikimate-3-phosphate (EPSP) to yield chorismate, which is the branch point compound that serves as the starting substrate for the three terminal pathways of aromatic amino acid biosynthesis. This reaction introduces a second double bond into the aromatic ring system. The chain is Chorismate synthase from Coxiella burnetii (strain RSA 493 / Nine Mile phase I).